Here is a 410-residue protein sequence, read N- to C-terminus: Fiber protein 2 (410 aa).

Residues 1–10 (MADQKRKLAD) are compositionally biased toward basic and acidic residues. The tract at residues 1–22 (MADQKRKLADPDAEAPTGKMAR) is disordered.

It belongs to the adenoviridae fiber family. Homotrimer. Interacts (via N-terminal tail region) with pentons.

Its subcellular location is the virion. The protein resides in the host nucleus. Functionally, forms spikes that protrude from each vertex of the icosahedral capsid. Interacts with host receptor to provide virion initial attachment to target cell. Fiber proteins are shed during virus entry, when virus is still at the cell surface. The polypeptide is Fiber protein 2 (Fowl adenovirus A serotype 1 (strain CELO / Phelps) (FAdV-1)).